The chain runs to 253 residues: Triosephosphate isomerase (253 aa).

9-11 (NWK) provides a ligand contact to substrate. His95 acts as the Electrophile in catalysis. Glu167 serves as the catalytic Proton acceptor. Substrate contacts are provided by residues Gly173, Ser213, and 234–235 (GG). A Phosphoserine modification is found at Ser213.

It belongs to the triosephosphate isomerase family. In terms of assembly, homodimer.

Its subcellular location is the cytoplasm. The catalysed reaction is D-glyceraldehyde 3-phosphate = dihydroxyacetone phosphate. It functions in the pathway carbohydrate biosynthesis; gluconeogenesis. The protein operates within carbohydrate degradation; glycolysis; D-glyceraldehyde 3-phosphate from glycerone phosphate: step 1/1. Its function is as follows. Involved in the gluconeogenesis. Catalyzes stereospecifically the conversion of dihydroxyacetone phosphate (DHAP) to D-glyceraldehyde-3-phosphate (G3P). This chain is Triosephosphate isomerase, found in Geobacillus kaustophilus (strain HTA426).